Here is a 62-residue protein sequence, read N- to C-terminus: Photosystem II reaction center protein Z (62 aa).

2 helical membrane-spanning segments follow: residues 8-28 (ALIALVLFSFVMVIGVPVAYA) and 41-61 (YLGSAIWAILVVIVAILNFFV).

This sequence belongs to the PsbZ family. As to quaternary structure, PSII is composed of 1 copy each of membrane proteins PsbA, PsbB, PsbC, PsbD, PsbE, PsbF, PsbH, PsbI, PsbJ, PsbK, PsbL, PsbM, PsbT, PsbX, PsbY, PsbZ, Psb30/Ycf12, peripheral proteins PsbO, CyanoQ (PsbQ), PsbU, PsbV and a large number of cofactors. It forms dimeric complexes.

The protein resides in the cellular thylakoid membrane. May control the interaction of photosystem II (PSII) cores with the light-harvesting antenna, regulates electron flow through the 2 photosystem reaction centers. PSII is a light-driven water plastoquinone oxidoreductase, using light energy to abstract electrons from H(2)O, generating a proton gradient subsequently used for ATP formation. In Rippkaea orientalis (strain PCC 8801 / RF-1) (Cyanothece sp. (strain PCC 8801)), this protein is Photosystem II reaction center protein Z.